Consider the following 255-residue polypeptide: Triosephosphate isomerase (255 aa).

10-12 contributes to the substrate binding site; that stretch reads NWK. The active-site Electrophile is the histidine 96. The Proton acceptor role is filled by glutamate 168. Residues glycine 174, serine 213, and 234–235 contribute to the substrate site; that span reads GG.

The protein belongs to the triosephosphate isomerase family. Homodimer.

It localises to the cytoplasm. The catalysed reaction is D-glyceraldehyde 3-phosphate = dihydroxyacetone phosphate. Its pathway is carbohydrate biosynthesis; gluconeogenesis. It participates in carbohydrate degradation; glycolysis; D-glyceraldehyde 3-phosphate from glycerone phosphate: step 1/1. Involved in the gluconeogenesis. Catalyzes stereospecifically the conversion of dihydroxyacetone phosphate (DHAP) to D-glyceraldehyde-3-phosphate (G3P). The polypeptide is Triosephosphate isomerase (Histophilus somni (strain 2336) (Haemophilus somnus)).